The sequence spans 717 residues: MESNAFGSSHLPSQALVVLSEAASGLHEALRGQRPFPSRVIPFDFPLLQLPDAKDLHNMSLVGNYFNPHLLLNHGMLVANGAAAAAAAAGAGPASYFASDRSPLGKPSVLSNFSLPSAFSPPKYIGISLDQNLFNGSESFRTDSASPTCTSHESMEGSQDYDAVEKGESPRSNNSQDPRDLRHLHNAGKSHQALATSSSASSSSSSSCSTSNPAISTATSSVAVSMASHLAASSPHHHPHTHAHSHPHPLAHPHAHSHHHVGHHVGAPPVSTAVTTHHHMAHPHPLSHHHAAHHAALASLSMAGLRAVPGGLSLVSGLQAAAAGGAIPEMCPVCGLKLSAEEWHTHFLTELDRLYKLSAGFERASLQATYMFAPPCPAQENAIRTSHNRWETFQRIRNNRQNRLRLKVRKRKYGEMYMMESLYCSSCPICKRKYALETGKIPPEDDAKSQEEIETVDVESCNDEVPDSGSELATPSSGSSGTVMPPSSMHNSNSQPGKLDGILYRTGCVLSQKDPHPDEHDVSTNVTTASSSSWPGEAPTQAHISVKTVSELSSTTHHYYNADSCGVGVNDTNSSSSTHNNGGGSNKDLMMDTASCQNDSDEDVIVDDDDTVKLTSKINYGKIQRRQDEQNVGSSRSLENISPVEERPRSEPQVSSTEPGPMDISHNNNNNNNNNNNNSNSNNNNNPSTKYAESMENSLSQLSSMGVPGLTQLDTKA.

Residues 140–152 are compositionally biased toward polar residues; it reads FRTDSASPTCTSH. Disordered stretches follow at residues 140–214, 229–270, 440–498, 511–539, 563–594, and 624–717; these read FRTD…SNPA, HLAA…APPV, KIPP…QPGK, SQKD…GEAP, DSCG…MDTA, and QRRQ…DTKA. Residues 195 to 214 show a composition bias toward low complexity; that stretch reads ATSSSASSSSSSSCSTSNPA. Residues 235-263 show a composition bias toward basic residues; it reads PHHHPHTHAHSHPHPLAHPHAHSHHHVGH. Residues 442 to 451 show a composition bias toward basic and acidic residues; that stretch reads PPEDDAKSQE. Residues 452–466 are compositionally biased toward acidic residues; sequence EIETVDVESCNDEVP. Polar residues predominate over residues 471-482; that stretch reads ELATPSSGSSGT. The segment covering 513-522 has biased composition (basic and acidic residues); it reads KDPHPDEHDV. 2 stretches are compositionally biased toward low complexity: residues 523–533 and 570–580; these read STNVTTASSSS and NDTNSSSSTHN. A compositionally biased stretch (polar residues) spans 630 to 640; that stretch reads QNVGSSRSLEN. The segment covering 667-686 has biased composition (low complexity); that stretch reads NNNNNNNNNNNNSNSNNNNN. Over residues 687-704 the composition is skewed to polar residues; it reads PSTKYAESMENSLSQLSS.

In embryos, expressed specifically in M12 (at protein level).

The protein resides in the nucleus. Functionally, required for the correct synaptic targeting of motoneurons RP5 and V to muscle 12 (M12). May be involved in the negative regulation of Tl in M12. Involved in the correct patterning of veins in the proximal (costal) region of the wing blade. The polypeptide is Protein Teyrha-meyrha (Drosophila melanogaster (Fruit fly)).